Consider the following 881-residue polypeptide: Dynamin-like GTPase MGM1, mitochondrial (881 aa).

The transit peptide at 1–59 (MNASPVRLLILRRQLATHPAILYSSPYIKSPLVHLHSRMSNVHRSAHANALSFVITRRS) directs the protein to the mitochondrion. Over 60 to 72 (ISHFPKIISKIIR) the chain is Mitochondrial matrix. Residues 73–92 (LPIYVGGGMAAAGSYIAYKM) traverse the membrane as a helical; Signal-anchor for type II membrane protein segment. Topologically, residues 93-881 (EEASSFTKDK…KSYKGVSKNL (789 aa)) are mitochondrial intermembrane. The disordered stretch occupies residues 145 to 183 (ATSLDDDESKRQGDPKDDDDEDDDDEDDENDSVDTTQDE). The segment covering 160 to 176 (KDDDDEDDDDEDDENDS) has biased composition (acidic residues). The Dynamin-type G domain maps to 207–505 (HLTLPSIVVI…LEISMSNALE (299 aa)). The interval 217 to 224 (GSQSSGKS) is G1 motif. GTP contacts are provided by serine 220, serine 221, glycine 222, lysine 223, serine 224, serine 225, and glycine 239. Serine 224 contributes to the Mg(2+) binding site. The segment at 243–245 (VTR) is G2 motif. Residues threonine 244 and aspartate 317 each contribute to the Mg(2+) site. The interval 317 to 320 (DLPG) is G3 motif. Residues 385-388 (TKLD) form a G4 motif region. Residues lysine 386, aspartate 388, and threonine 415 each contribute to the GTP site. The tract at residues 414–417 (ITKT) is G5 motif. A paddle region region spans residues 668 to 780 (STADQVENCI…KMLKNKCHST (113 aa)). A disulfide bridge links cysteine 777 with cysteine 786. Residues 780 to 872 (TIEKDRCPEV…KIDSILVFKK (93 aa)) form the GED domain.

This sequence belongs to the TRAFAC class dynamin-like GTPase superfamily. Dynamin/Fzo/YdjA family. In terms of assembly, oligomeric complex consisting of membrane-bound and soluble forms of MGM1. Associates with FZO1 through interaction with the intermembrane space domain of UGO1 which binds FZO1 through its cytoplasmic domain. Post-translationally, cleavage of the transit peptide by mitochondrial processing protease (MPP) produces a long integral membrane form of MGM1 (l-MGM1). Further processing by the rhomboid protease PCP1 produces a short peripheral membrane form of MGM1 (s-MGM1). Both isoforms are required for full activity.

Its subcellular location is the mitochondrion inner membrane. The protein resides in the mitochondrion intermembrane space. The catalysed reaction is GTP + H2O = GDP + phosphate + H(+). Dynamin-related GTPase that is essential for normal mitochondrial morphology by mediating fusion of the mitochondrial inner membranes, regulating cristae morphology and maintaining respiratory chain function. Exists in two forms: the transmembrane, long form (Dynamin-like GTPase MGM1, long form; L-MGM1), which is tethered to the inner mitochondrial membrane, and the short soluble form (Dynamin-like GTPase MGM1, short form; S-MGM1), which results from proteolytic cleavage and localizes in the intermembrane space. Both forms (L-MGM1 and S-MGM1) cooperate to catalyze the fusion of the mitochondrial inner membrane. The equilibrium between L-MGM1 and S-MGM1 is essential: excess levels of S-MGM1, following loss of mitochondrial membrane potential, lead to an impaired equilibrium between L-MGM1 and S-MGM1, inhibiting mitochondrial fusion. Plays a role in the maintenance and remodeling of mitochondrial cristae, some invaginations of the mitochondrial inner membrane that provide an increase in the surface area. Probably acts by forming helical filaments at the inside of inner membrane tubes with the shape and dimensions of crista junctions. In terms of biological role, constitutes the transmembrane long form (L-MGM1) that plays a central role in mitochondrial inner membrane fusion and cristae morphology. L-MGM1 and the soluble short form (S-MGM1) form higher-order helical assemblies that coordinate the fusion of mitochondrial inner membranes. Inner membrane-anchored L-MGM1 molecules initiate membrane remodeling by recruiting soluble S-MGM1 to rapidly polymerize into a flexible cylindrical scaffold encaging the mitochondrial inner membrane. Once at the membrane surface, the formation of S-MGM1 helices induce bilayer curvature. MGM1 dimerization through the paddle region, which inserts into cardiolipin-containing membrane, promotes GTP hydrolysis and the helical assembly of a flexible MGM1 lattice on the membrane, which drives membrane curvature and mitochondrial fusion. Its function is as follows. Constitutes the soluble short form (S-MGM1) generated by cleavage by PCP1, which plays a central role in mitochondrial inner membrane fusion and cristae morphology. The transmembrane long form (L-MGM1) and the S-MGM1 form higher-order helical assemblies that coordinate the fusion of mitochondrial inner membranes. Inner membrane-anchored L-MGM1 molecules initiate membrane remodeling by recruiting soluble S-MGM1 to rapidly polymerize into a flexible cylindrical scaffold encaging the mitochondrial inner membrane. Once at the membrane surface, the formation of S-MGM1 helices induce bilayer curvature. MGM1 dimerization through the paddle region, which inserts into cardiolipin-containing membrane, promotes GTP hydrolysis and the helical assembly of a flexible MGM1 lattice on the membrane, which drives membrane curvature and mitochondrial fusion. Excess levels of S-MGM1 produced by cleavage by PCP1 following stress conditions that induce loss of mitochondrial membrane potential, lead to an impaired equilibrium between L-MGM1 and S-MGM1, thereby inhibiting mitochondrial fusion. The sequence is that of Dynamin-like GTPase MGM1, mitochondrial from Saccharomyces cerevisiae (strain ATCC 204508 / S288c) (Baker's yeast).